Reading from the N-terminus, the 110-residue chain is U1-lycotoxin-Ls1jj (110 aa).

The first 20 residues, 1 to 20 (MKFVLLFGVLLVTLFSYSSA), serve as a signal peptide directing secretion. A propeptide spanning residues 21 to 44 (EMLDDFDQADEDELLSLIEKEEAR) is cleaved from the precursor. Cystine bridges form between Cys47-Cys62, Cys54-Cys71, Cys61-Cys89, and Cys73-Cys87.

This sequence belongs to the neurotoxin 19 (CSTX) family. 03 subfamily. As to expression, expressed by the venom gland.

Its subcellular location is the secreted. The polypeptide is U1-lycotoxin-Ls1jj (Lycosa singoriensis (Wolf spider)).